The primary structure comprises 167 residues: Bacterial non-heme ferritin (167 aa).

The 145-residue stretch at 1 to 145 (MLSKEVVKLL…GIVDKIKLIG (145 aa)) folds into the Ferritin-like diiron domain. Glutamate 17, glutamate 50, histidine 53, glutamate 94, and glutamine 127 together coordinate Fe cation.

It belongs to the ferritin family. Prokaryotic subfamily. In terms of assembly, homooligomer of 24 subunits that assemble into a spherical protein shell (12 +/- 1 nM diameter) that can sequester at least 2000 iron atoms.

It localises to the cytoplasm. The catalysed reaction is 4 Fe(2+) + O2 + 6 H2O = 4 iron(III) oxide-hydroxide + 12 H(+). In terms of biological role, iron-storage protein. The sequence is that of Bacterial non-heme ferritin (ftn) from Campylobacter jejuni subsp. jejuni serotype O:2 (strain ATCC 700819 / NCTC 11168).